Here is a 407-residue protein sequence, read N- to C-terminus: Argininosuccinate synthase (407 aa).

ATP-binding positions include 13 to 21 and Ala-40; that span reads AYSGGLDTS. Positions 91 and 96 each coordinate L-citrulline. Gly-121 is a binding site for ATP. Positions 123, 127, and 128 each coordinate L-aspartate. Asn-127 lines the L-citrulline pocket. 5 residues coordinate L-citrulline: Arg-131, Ser-182, Ser-191, Glu-267, and Tyr-279.

Belongs to the argininosuccinate synthase family. Type 1 subfamily. In terms of assembly, homotetramer.

The protein localises to the cytoplasm. The enzyme catalyses L-citrulline + L-aspartate + ATP = 2-(N(omega)-L-arginino)succinate + AMP + diphosphate + H(+). Its pathway is amino-acid biosynthesis; L-arginine biosynthesis; L-arginine from L-ornithine and carbamoyl phosphate: step 2/3. This chain is Argininosuccinate synthase, found in Rhizobium etli (strain ATCC 51251 / DSM 11541 / JCM 21823 / NBRC 15573 / CFN 42).